A 1745-amino-acid polypeptide reads, in one-letter code: DNA-directed RNA polymerase II subunit RPB1 (1745 aa).

Zn(2+) contacts are provided by C67, C70, C77, H80, C107, C110, C148, and C167. Mg(2+) contacts are provided by D481, D483, and D485. Residues 810–822 are bridging helix; the sequence is PQEFFFHAMGGRE. A Glycyl lysine isopeptide (Lys-Gly) (interchain with G-Cter in ubiquitin) cross-link involves residue K1247. A disordered region spans residues 1530–1745; it reads NGPTSPGFGD…KEQKDENGTH (216 aa). The span at 1546–1730 shows a compositional bias: low complexity; that stretch reads SPTSPAYSPT…SPRSPSYSPS (185 aa). Tandem repeats lie at residues 1552-1558, 1559-1565, 1566-1572, 1573-1579, 1580-1586, 1587-1593, 1594-1600, 1601-1607, 1608-1614, 1615-1621, 1622-1628, 1629-1635, 1636-1642, 1643-1649, 1650-1656, 1657-1663, 1664-1670, 1671-1677, 1678-1684, 1685-1691, 1692-1698, 1699-1705, 1706-1712, and 1713-1719. The C-terminal domain (CTD); 25 X 7 AA approximate tandem repeats of Y-S-P-T-S-P-[TSAN] stretch occupies residues 1552–1726; sequence YSPTSPSYSP…SPQYSPRSPS (175 aa). One copy of the 25; approximate repeat lies at 1720–1726; that stretch reads YSPRSPS. Residues 1734–1745 show a composition bias toward basic and acidic residues; the sequence is NDKEQKDENGTH.

It belongs to the RNA polymerase beta' chain family. In terms of assembly, component of the RNA polymerase II (Pol II) complex consisting of 12 subunits. Post-translationally, the tandem 7 residues repeats in the C-terminal domain (CTD) can be highly phosphorylated. The phosphorylation activates Pol II. Phosphorylation occurs mainly at residues 'Ser-2' and 'Ser-5' of the heptapeptide repeat. The phosphorylation state is believed to result from the balanced action of site-specific CTD kinases and phosphatase, and a 'CTD code' that specifies the position of Pol II within the transcription cycle has been proposed. Following transcription stress, the elongating form of RNA polymerase II (RNA pol IIo) is polyubiquitinated via 'Lys-63'-linkages on Lys-1247 at DNA damage sites without leading to degradation: ubiquitination promotes RNA pol IIo backtracking to allow access by the transcription-coupled nucleotide excision repair (TC-NER) machinery. Subsequent DEF1-dependent polyubiquitination by the elongin complex via 'Lys-48'-linkages may lead to proteasome-mediated degradation; presumably at stalled RNA pol II where TC-NER has failed, to halt global transcription and enable 'last resort' DNA repair pathways.

It localises to the nucleus. The enzyme catalyses RNA(n) + a ribonucleoside 5'-triphosphate = RNA(n+1) + diphosphate. Its function is as follows. DNA-dependent RNA polymerase catalyzes the transcription of DNA into RNA using the four ribonucleoside triphosphates as substrates. Largest and catalytic component of RNA polymerase II which synthesizes mRNA precursors and many functional non-coding RNAs. Forms the polymerase active center together with the second largest subunit. Pol II is the central component of the basal RNA polymerase II transcription machinery. It is composed of mobile elements that move relative to each other. RPB1 is part of the core element with the central large cleft, the clamp element that moves to open and close the cleft and the jaws that are thought to grab the incoming DNA template. At the start of transcription, a single-stranded DNA template strand of the promoter is positioned within the central active site cleft of Pol II. A bridging helix emanates from RPB1 and crosses the cleft near the catalytic site and is thought to promote translocation of Pol II by acting as a ratchet that moves the RNA-DNA hybrid through the active site by switching from straight to bent conformations at each step of nucleotide addition. During transcription elongation, Pol II moves on the template as the transcript elongates. Elongation is influenced by the phosphorylation status of the C-terminal domain (CTD) of Pol II largest subunit (RPB1), which serves as a platform for assembly of factors that regulate transcription initiation, elongation, termination and mRNA processing. The chain is DNA-directed RNA polymerase II subunit RPB1 (RPB1) from Eremothecium gossypii (strain ATCC 10895 / CBS 109.51 / FGSC 9923 / NRRL Y-1056) (Yeast).